The chain runs to 90 residues: ESAT-6-like protein EsxE (90 aa).

It belongs to the WXG100 family. ESAT-6 subfamily.

The protein localises to the secreted. This is ESAT-6-like protein EsxE from Mycobacterium tuberculosis (strain CDC 1551 / Oshkosh).